The primary structure comprises 226 residues: Ribonuclease 3 (226 aa).

Positions leucine 7–aspartate 129 constitute an RNase III domain. Glutamate 42 contacts Mg(2+). Aspartate 46 is an active-site residue. Mg(2+)-binding residues include aspartate 115 and glutamate 118. The active site involves glutamate 118. A DRBM domain is found at aspartate 156–lysine 226.

It belongs to the ribonuclease III family. In terms of assembly, homodimer. The cofactor is Mg(2+).

The protein localises to the cytoplasm. The enzyme catalyses Endonucleolytic cleavage to 5'-phosphomonoester.. Digests double-stranded RNA. Involved in the processing of primary rRNA transcript to yield the immediate precursors to the large and small rRNAs (23S and 16S). Processes some mRNAs, and tRNAs when they are encoded in the rRNA operon. Processes pre-crRNA and tracrRNA of type II CRISPR loci if present in the organism. The chain is Ribonuclease 3 from Shewanella sp. (strain ANA-3).